Consider the following 351-residue polypeptide: MELSTQMNVFEELLVPTKQETTDNNINNLSFNGGFDHHHHQFFPNGYNIDYLCFNNEEEDENTLLYPSSFMDLISQPPPLLLHQPPPLQPLSPPLSSSATAGATFDYPFLEALQEIIDSSSSSPPLILQNGQEENFNNPMSYPSPLMESDQSKSFSVGYCGGETNKKKSKKLEGQPSKNLMAERRRRKRLNDRLSMLRSIVPKISKMDRTSILGDAIDYMKELLDKINKLQDEEQELGNSNNSHHSKLFGDLKDLNANEPLVRNSPKFEIDRRDEDTRVDICCSPKPGLLLSTVNTLETLGLEIEQCVISCFSDFSLQASCSEGAEQRDFITSEDIKQALFRNAGYGGSCL.

The 50-residue stretch at 174 to 223 folds into the bHLH domain; it reads GQPSKNLMAERRRRKRLNDRLSMLRSIVPKISKMDRTSILGDAIDYMKEL.

Homodimer. Interacts with FAMA. Broadly expressed.

It is found in the nucleus. In terms of biological role, transcription factor. May be involved in the differentiation of stomatal guard cells. The sequence is that of Transcription factor bHLH93 (BHLH93) from Arabidopsis thaliana (Mouse-ear cress).